The sequence spans 212 residues: Thymidylate kinase (212 aa).

Position 10 to 17 (10 to 17) interacts with ATP; it reads GLEGAGKT.

The protein belongs to the thymidylate kinase family.

The enzyme catalyses dTMP + ATP = dTDP + ADP. In terms of biological role, phosphorylation of dTMP to form dTDP in both de novo and salvage pathways of dTTP synthesis. The sequence is that of Thymidylate kinase from Yersinia pseudotuberculosis serotype O:3 (strain YPIII).